Reading from the N-terminus, the 553-residue chain is Sensitive to high expression protein 9 homolog, mitochondrial (553 aa).

Residues 61-174 (FFSTQPPKDT…TAQPELPSRT (114 aa)) form a disordered region. Positions 62–84 (FSTQPPKDTPENMNNKETGSSNV) are enriched in polar residues. Positions 103–116 (AKEDTTDATNKSET) are enriched in basic and acidic residues. Low complexity predominate over residues 133 to 160 (SDVSSASTSDSANSSETTTTTSETTPEN). Coiled coils occupy residues 210 to 241 (SAIE…HNYK) and 277 to 309 (RLDH…DLNA). The helical transmembrane segment at 331-351 (WGTWGLMGVNVLLFLVLQFVA) threads the bilayer. Topologically, residues 352-523 (EPWRRKRLMK…RIDLKMRDVS (172 aa)) are mitochondrial intermembrane. 2 disordered regions span residues 408-428 (ALAS…RTEG) and 443-497 (AEEA…QTLS). 2 stretches are compositionally biased toward low complexity: residues 443–473 (AEEA…QTPE) and 484–495 (TWKQTAQKWQQT). Residues 524–544 (LLALESAATGAAVVASVAFFV) form a helical membrane-spanning segment. Topologically, residues 545–553 (LRSSGSGKA) are mitochondrial matrix.

It belongs to the SHE9 family. In terms of assembly, homooligomer.

It localises to the mitochondrion inner membrane. Required for the maintenance of the structure of the mitochondrial inner membrane. Involved in mitochondrial morphology. Causes growth arrest when highly overexpressed. The polypeptide is Sensitive to high expression protein 9 homolog, mitochondrial (she-9) (Neurospora crassa (strain ATCC 24698 / 74-OR23-1A / CBS 708.71 / DSM 1257 / FGSC 987)).